A 379-amino-acid polypeptide reads, in one-letter code: Succinyl-diaminopimelate desuccinylase (379 aa).

Residue H70 participates in Zn(2+) binding. The active site involves D72. Residue D103 participates in Zn(2+) binding. The Proton acceptor role is filled by E137. Zn(2+) is bound by residues E138, E166, and H352.

This sequence belongs to the peptidase M20A family. DapE subfamily. Homodimer. Zn(2+) serves as cofactor. Co(2+) is required as a cofactor.

The enzyme catalyses N-succinyl-(2S,6S)-2,6-diaminopimelate + H2O = (2S,6S)-2,6-diaminopimelate + succinate. Its pathway is amino-acid biosynthesis; L-lysine biosynthesis via DAP pathway; LL-2,6-diaminopimelate from (S)-tetrahydrodipicolinate (succinylase route): step 3/3. Functionally, catalyzes the hydrolysis of N-succinyl-L,L-diaminopimelic acid (SDAP), forming succinate and LL-2,6-diaminopimelate (DAP), an intermediate involved in the bacterial biosynthesis of lysine and meso-diaminopimelic acid, an essential component of bacterial cell walls. The sequence is that of Succinyl-diaminopimelate desuccinylase from Burkholderia lata (strain ATCC 17760 / DSM 23089 / LMG 22485 / NCIMB 9086 / R18194 / 383).